A 382-amino-acid polypeptide reads, in one-letter code: Serine/threonine-protein kinase (382 aa).

Over residues 1–10 (MENKQCDHLT) the composition is skewed to basic and acidic residues. The interval 1 to 75 (MENKQCDHLT…ASESDEDDDD (75 aa)) is disordered. A compositionally biased stretch (polar residues) spans 12–24 (WFSTTSDASESMD). Positions 45 to 75 (ADEDLYSDISEGDLEYSDCDSASESDEDDDD) are enriched in acidic residues. The region spanning 93 to 379 (YTVIKTLTPG…AEELLSYPMF (287 aa)) is the Protein kinase domain. Residues 99–107 (LTPGSEGRV) and K122 each bind ATP. D207 serves as the catalytic Proton acceptor.

Belongs to the protein kinase superfamily. Ser/Thr protein kinase family.

The enzyme catalyses L-seryl-[protein] + ATP = O-phospho-L-seryl-[protein] + ADP + H(+). It carries out the reaction L-threonyl-[protein] + ATP = O-phospho-L-threonyl-[protein] + ADP + H(+). The protein is Serine/threonine-protein kinase (US2) of Equus caballus (Horse).